The primary structure comprises 156 residues: MSLLIDFIDETEEVKEEYVNLIREILGKAAQMEKIEDGAELSVTFVDNERIREINRDYRDKDQPTDVISFAMEEMGEGEMEIVGVEMPRMLGDLIISIPRAKEQAEEYGHSFDRELGFLALHGFLHLLGYDHMTEEDEKEMFGRQKEILEAFGLGR.

Residues H122, H126, and H132 each contribute to the Zn(2+) site.

This sequence belongs to the endoribonuclease YbeY family. Zn(2+) is required as a cofactor.

It is found in the cytoplasm. Its function is as follows. Single strand-specific metallo-endoribonuclease involved in late-stage 70S ribosome quality control and in maturation of the 3' terminus of the 16S rRNA. This chain is Endoribonuclease YbeY, found in Bacillus cereus (strain ZK / E33L).